We begin with the raw amino-acid sequence, 368 residues long: MAPCTLLLLLAAALAPTQTRAGPHSLRYFVTAVSRPGLGEPRFIAVGYVDDTQFVRFDSDADNPRFEPRAPWMEQEGPEYWEEQTQRAKSDEQWFRVSLRTAQRYYNQSKGGSHTFQRMFGCDVGSDWRLLRGYQQFAYDGRDYIALNEDLKTWTAADTAALITRRKWEQAGDAEYYRAYLEGECVEWLRRYLELGNETLLRTDSPKAHVTYHPRSQVDVTLRCWALGFYPADITLTWQLNGEDLTQDMELVETRPAGDGTFQKWAAVVVPLGKEQNYTCHVHHKGLPEPLTLRWKLPPSTVSNTVIIAVLVVLGAAIVTGAVVAFVMKMRRNTGGKGVNYALAPGSQTSDLSLPDGKVMVHDPHSLA.

The first 21 residues, 1-21, serve as a signal peptide directing secretion; that stretch reads MAPCTLLLLLAAALAPTQTRA. The alpha-1 stretch occupies residues 22 to 111; that stretch reads GPHSLRYFVT…AQRYYNQSKG (90 aa). Over 22–305 the chain is Extracellular; it reads GPHSLRYFVT…KLPPSTVSNT (284 aa). The N-linked (GlcNAc...) asparagine glycan is linked to N107. The segment at 112–203 is alpha-2; it reads GSHTFQRMFG…ELGNETLLRT (92 aa). Residues C122 and C185 are joined by a disulfide bond. Residues N197 and N277 are each glycosylated (N-linked (GlcNAc...) asparagine). Residues 204 to 295 form an alpha-3 region; sequence DSPKAHVTYH…GLPEPLTLRW (92 aa). An Ig-like C1-type domain is found at 206–294; that stretch reads PKAHVTYHPR…KGLPEPLTLR (89 aa). C224 and C280 are oxidised to a cystine. Positions 296–305 are connecting peptide; the sequence is KLPPSTVSNT. A helical transmembrane segment spans residues 306 to 328; that stretch reads VIIAVLVVLGAAIVTGAVVAFVM. Residues 329-368 lie on the Cytoplasmic side of the membrane; the sequence is KMRRNTGGKGVNYALAPGSQTSDLSLPDGKVMVHDPHSLA. 2 positions are modified to phosphoserine: S350 and S353.

The protein belongs to the MHC class I family. As to quaternary structure, heterodimer of an alpha chain and a beta chain (beta-2-microglobulin).

It localises to the membrane. Functionally, involved in the presentation of foreign antigens to the immune system. This chain is H-2 class I histocompatibility antigen, K-D alpha chain (H2-K1), found in Mus musculus (Mouse).